The sequence spans 288 residues: Probable proteasome subunit alpha type-7 (288 aa).

The residue at position 2 (Thr2) is an N-acetylthreonine. Residues Ile247–Glu288 are disordered. The segment covering Gly249–Asn268 has biased composition (acidic residues). The segment covering Ala269–Thr279 has biased composition (low complexity).

The protein belongs to the peptidase T1A family. As to quaternary structure, the 26S proteasome consists of a 20S proteasome core and two 19S regulatory subunits. The 20S proteasome core is composed of 28 subunits that are arranged in four stacked rings, resulting in a barrel-shaped structure. The two end rings are each formed by seven alpha subunits, and the two central rings are each formed by seven beta subunits. The catalytic chamber with the active sites is on the inside of the barrel. The alpha and beta forms are probably products of the same gene with different post-translational modifications.

It localises to the cytoplasm. The protein resides in the nucleus. Functionally, the proteasome degrades poly-ubiquitinated proteins in the cytoplasm and in the nucleus. It is essential for the regulated turnover of proteins and for the removal of misfolded proteins. The proteasome is a multicatalytic proteinase complex that is characterized by its ability to cleave peptides with Arg, Phe, Tyr, Leu, and Glu adjacent to the leaving group at neutral or slightly basic pH. It has an ATP-dependent proteolytic activity. This Saccharomyces cerevisiae (strain ATCC 204508 / S288c) (Baker's yeast) protein is Probable proteasome subunit alpha type-7 (PRE10).